We begin with the raw amino-acid sequence, 284 residues long: Short-chain dehydrogenase RED1 (284 aa).

Residues Ile-11, Thr-37, Asp-58, Asn-86, Tyr-151, Lys-155, Val-184, and Thr-186 each contribute to the NADP(+) site. The active-site Proton acceptor is Tyr-151. Catalysis depends on Lys-155, which acts as the Lowers pKa of active site Tyr.

This sequence belongs to the short-chain dehydrogenases/reductases (SDR) family.

Its pathway is polyketide biosynthesis. Its function is as follows. Short-chain dehydrogenase; part of the gene cluster that mediates the biosynthesis of pyriculol and pyriculariol, two heptaketides that induce lesion formation upon application on rice leaves but are dispensable for pathogenicity. The highly reducing polyketide synthase synthesizes the heptaketide backbone of pyriculol and pyriculariol. Pyriculol and pyriculariol contain several hydroxyl moieties and double bonds, so it can be assumed that several reduction steps occur during biosynthesis. These reactions could be executed by PKS19 itself or partly by the tailoring enzymes OXR1, OXR2, RED1, RED2 or RED3, identified within the cluster. The FAD-linked oxidoreductase OXR1 is the only tailoring enzyme for which the function has been determined yet, and is involved in the oxidation of dihydropyriculol and dihydropyriculariol into pyriculol and pyriculariol, respectively. The protein is Short-chain dehydrogenase RED1 of Pyricularia oryzae (strain 70-15 / ATCC MYA-4617 / FGSC 8958) (Rice blast fungus).